Here is a 719-residue protein sequence, read N- to C-terminus: Pesticidal crystal protein Cry1Id (719 aa).

The protein belongs to the delta endotoxin family.

Promotes colloidosmotic lysis by binding to the midgut epithelial cells of many lepidopteran larvae. Active on Plutella xylostella and on Bombyx mori. In Bacillus thuringiensis, this protein is Pesticidal crystal protein Cry1Id (cry1Id).